Reading from the N-terminus, the 249-residue chain is Probable calcium-binding protein CML12 (249 aa).

The segment covering 1–24 (MQSQRERPREDRVHEETRGADHAH) has biased composition (basic and acidic residues). The segment at 1–80 (MQSQRERPRE…RKGKAPATAE (80 aa)) is disordered. Low complexity predominate over residues 30-56 (AAAAASATATETATRTMSLHAGGVVVV). The segment covering 57-70 (DGKEKGKKEEGEGK) has biased composition (basic and acidic residues). EF-hand domains follow at residues 91–126 (EQLRQLHEIFLRFDLDGDGSLTKLELAALLRSLGLR), 128–163 (AAGDEIHALIAAIDADGNGTVEFDELASSLADLILG), 171–206 (VDQAELAEAFRAFDRDGNGFISAAELARSMARMGHP), and 207–242 (ICYAELTDMMREADTDGDGLISFEEFTAIMAKSALD). Ca(2+) is bound by residues Asp-104, Asp-106, Asp-108, Ser-110, Glu-115, Asp-141, Asp-143, Asn-145, Thr-147, Glu-152, Asp-184, Asp-186, Asn-188, Glu-195, Asp-220, Asp-222, Asp-224, and Glu-231.

Functionally, potential calcium sensor. In Oryza sativa subsp. japonica (Rice), this protein is Probable calcium-binding protein CML12 (CML12).